A 98-amino-acid polypeptide reads, in one-letter code: Citrate lyase acyl carrier protein (98 aa).

Ser14 carries the post-translational modification O-(phosphoribosyl dephospho-coenzyme A)serine.

It belongs to the CitD family. As to quaternary structure, oligomer with a subunit composition of (alpha,beta,gamma)6.

It localises to the cytoplasm. Its function is as follows. Covalent carrier of the coenzyme of citrate lyase. The protein is Citrate lyase acyl carrier protein of Albidiferax ferrireducens (strain ATCC BAA-621 / DSM 15236 / T118) (Rhodoferax ferrireducens).